Consider the following 1234-residue polypeptide: DNA-directed RNA polymerase subunit beta (1234 aa).

This sequence belongs to the RNA polymerase beta chain family. As to quaternary structure, the RNAP catalytic core consists of 2 alpha, 1 beta, 1 beta' and 1 omega subunit. When a sigma factor is associated with the core the holoenzyme is formed, which can initiate transcription.

It catalyses the reaction RNA(n) + a ribonucleoside 5'-triphosphate = RNA(n+1) + diphosphate. Its function is as follows. DNA-dependent RNA polymerase catalyzes the transcription of DNA into RNA using the four ribonucleoside triphosphates as substrates. The protein is DNA-directed RNA polymerase subunit beta of Clostridium perfringens (strain ATCC 13124 / DSM 756 / JCM 1290 / NCIMB 6125 / NCTC 8237 / Type A).